The chain runs to 79 residues: Small ribosomal subunit protein bS16 (79 aa).

This sequence belongs to the bacterial ribosomal protein bS16 family.

This Desulfovibrio desulfuricans (strain ATCC 27774 / DSM 6949 / MB) protein is Small ribosomal subunit protein bS16.